The chain runs to 388 residues: MNTSQLREKFKEVFGVEADHTFFSPGRINLIGEHTDYNGGNVLPVAITLGTYGAARKRDDKVLRFFSANFEEKGIIEVPLENLRFEKEHNWTNYPKGVLHFLQEAGHTIDSGMDIYIYGNIPNGSGLSSSSSLELLIGVIVEKLYDIKLERLDLVKIGKQTENDFIGVNSGIMDQFAIGMGADQCAIYLDTNTLKYDLVPLDLKDNVVVIMNTNKRRELADSKYNERRAECETAVSELQEKLDIQTLGELDFLTFDAYSYLIKDENRIKRARHVVLENQRTLQARKALETGDLEGFGRLMNASHVSLEYDYEVTGLELDTLAHTAWEQEGVLGARMTGAGFGGCAIALVNKDKVEDFKKAVGQRYEEVVGYAPSFYIAEVTGGSRVLD.

33–36 (EHTD) is a substrate binding site. ATP-binding positions include Ser-67 and 124–130 (GSGLSSS). Ser-130 and Glu-162 together coordinate Mg(2+). Asp-174 acts as the Proton acceptor in catalysis. Tyr-224 serves as a coordination point for substrate.

This sequence belongs to the GHMP kinase family. GalK subfamily.

Its subcellular location is the cytoplasm. The enzyme catalyses alpha-D-galactose + ATP = alpha-D-galactose 1-phosphate + ADP + H(+). It participates in carbohydrate metabolism; galactose metabolism. In terms of biological role, catalyzes the transfer of the gamma-phosphate of ATP to D-galactose to form alpha-D-galactose-1-phosphate (Gal-1-P). This Streptococcus thermophilus protein is Galactokinase.